The chain runs to 401 residues: Argininosuccinate synthase (401 aa).

9 to 17 (AYSGGLDTS) provides a ligand contact to ATP. Position 86 (Tyr86) interacts with L-citrulline. Gly116 contacts ATP. Positions 118, 122, and 123 each coordinate L-aspartate. Residue Asn122 participates in L-citrulline binding. The L-citrulline site is built by Arg126, Ser174, Ser183, Glu259, and Tyr271.

The protein belongs to the argininosuccinate synthase family. Type 1 subfamily. As to quaternary structure, homotetramer.

It localises to the cytoplasm. It carries out the reaction L-citrulline + L-aspartate + ATP = 2-(N(omega)-L-arginino)succinate + AMP + diphosphate + H(+). It participates in amino-acid biosynthesis; L-arginine biosynthesis; L-arginine from L-ornithine and carbamoyl phosphate: step 2/3. The chain is Argininosuccinate synthase from Bacillus cereus (strain AH187).